Here is a 112-residue protein sequence, read N- to C-terminus: Ribonuclease P protein component (112 aa).

It belongs to the RnpA family. In terms of assembly, consists of a catalytic RNA component (M1 or rnpB) and a protein subunit.

The catalysed reaction is Endonucleolytic cleavage of RNA, removing 5'-extranucleotides from tRNA precursor.. Functionally, RNaseP catalyzes the removal of the 5'-leader sequence from pre-tRNA to produce the mature 5'-terminus. It can also cleave other RNA substrates such as 4.5S RNA. The protein component plays an auxiliary but essential role in vivo by binding to the 5'-leader sequence and broadening the substrate specificity of the ribozyme. The chain is Ribonuclease P protein component from Pelotomaculum thermopropionicum (strain DSM 13744 / JCM 10971 / SI).